The sequence spans 270 residues: Cell division protein DivIB (270 aa).

Residues 1-28 (MAENKRVISIENRIPELKKYRKKKLVRH) are Cytoplasmic-facing. A helical membrane pass occupies residues 29-49 (LAILIGIFVILIAITLYFLSP). The Extracellular portion of the chain corresponds to 50–270 (LSKLDKIAVS…AAKEKKETNE (221 aa)). Positions 51–119 (SKLDKIAVSG…NDVQINITEF (69 aa)) constitute a POTRA domain.

The protein belongs to the FtsQ/DivIB family. DivIB subfamily.

It localises to the cell membrane. Functionally, cell division protein that may be involved in stabilizing or promoting the assembly of the division complex. The sequence is that of Cell division protein DivIB from Listeria monocytogenes serovar 1/2a (strain ATCC BAA-679 / EGD-e).